The chain runs to 102 residues: ATP-dependent Clp protease adapter protein ClpS (102 aa).

This sequence belongs to the ClpS family. As to quaternary structure, binds to the N-terminal domain of the chaperone ClpA.

In terms of biological role, involved in the modulation of the specificity of the ClpAP-mediated ATP-dependent protein degradation. The sequence is that of ATP-dependent Clp protease adapter protein ClpS from Shewanella amazonensis (strain ATCC BAA-1098 / SB2B).